A 615-amino-acid chain; its full sequence is Medium-chain acyl-CoA ligase ACSF2, mitochondrial (615 aa).

The N-terminal 41 residues, 1–41 (MAVYVGMLRLGRLCAGSSGVLGARAALSRSWQEARLQGVRF), are a transit peptide targeting the mitochondrion. Position 179 is an N6-acetyllysine (Lys179). At Lys182 the chain carries N6-acetyllysine; alternate. Lys182 bears the N6-succinyllysine; alternate mark. 263-271 (TSGTTGSPK) contributes to the ATP binding site. 2 positions are modified to N6-acetyllysine: Lys340 and Lys398. Lys478 bears the N6-succinyllysine mark. The ATP site is built by Asp493 and Arg508. The residue at position 510 (Lys510) is an N6-acetyllysine. Lys544 and Lys570 each carry N6-acetyllysine; alternate. Lys544 and Lys570 each carry N6-succinyllysine; alternate. Lys599 is a binding site for ATP. At Lys599 the chain carries N6-succinyllysine.

The protein belongs to the ATP-dependent AMP-binding enzyme family.

The protein resides in the mitochondrion. It carries out the reaction a medium-chain fatty acid + ATP + CoA = a medium-chain fatty acyl-CoA + AMP + diphosphate. The catalysed reaction is octanoate + ATP + CoA = octanoyl-CoA + AMP + diphosphate. In terms of biological role, acyl-CoA synthases catalyze the initial reaction in fatty acid metabolism, by forming a thioester with CoA. Has some preference toward medium-chain substrates. Plays a role in adipocyte differentiation. The protein is Medium-chain acyl-CoA ligase ACSF2, mitochondrial of Homo sapiens (Human).